The sequence spans 57 residues: Large ribosomal subunit protein bL32 (57 aa).

The interval 1–20 (MAVQQRRVSKSRKGMRRSHD) is disordered. Basic residues predominate over residues 7-19 (RVSKSRKGMRRSH).

The protein belongs to the bacterial ribosomal protein bL32 family.

The chain is Large ribosomal subunit protein bL32 from Ureaplasma urealyticum serovar 10 (strain ATCC 33699 / Western).